We begin with the raw amino-acid sequence, 307 residues long: Solute carrier family 25 member 53 (307 aa).

The interval 1-23 (MGEQNHSPGKELQHRTRAEAPGK) is disordered. The span at 8-22 (PGKELQHRTRAEAPG) shows a compositional bias: basic and acidic residues. Solcar repeat units lie at residues 25-105 (SWHS…LLCF), 112-202 (HTLG…IQDG), and 210-302 (HWVP…HSRK). A run of 6 helical transmembrane segments spans residues 31–51 (YALG…IYKV), 82–102 (YPPL…YDSL), 112–132 (HTLG…AVAL), 181–201 (VLAR…PIQD), 215–235 (LVSG…LIVL), and 269–290 (IYRG…TTAI).

Belongs to the mitochondrial carrier (TC 2.A.29) family.

It localises to the mitochondrion inner membrane. This chain is Solute carrier family 25 member 53 (SLC25A53), found in Homo sapiens (Human).